Here is a 284-residue protein sequence, read N- to C-terminus: RAD52 motif-containing protein 1 (284 aa).

The tract at residues methionine 1–lysine 92 is necessary for nuclear localization and for nucleolar accumulation in response to heat shock. The 84-residue stretch at lysine 15–arginine 98 folds into the RRM domain. The interval proline 90–lysine 133 is necessary for nuclear and nucleolar localization.

As to quaternary structure, homodimer. As to expression, expressed in testis.

Its subcellular location is the nucleus. The protein localises to the cytoplasm. It localises to the nucleolus. The protein resides in the PML body. It is found in the cajal body. In terms of biological role, may confer resistance to the antitumor agent cisplatin. Binds to DNA and RNA. This Homo sapiens (Human) protein is RAD52 motif-containing protein 1 (RDM1).